A 100-amino-acid chain; its full sequence is MKLTSREMEKLMIVVAADLARRRKERGLKLNYPEAVAMITYEVLEGARDGKTVAQLMQYGATILTKEDVMEGVAEMIPDIQIEATFPDGTKLVTVHDPIR.

The protein belongs to the urease gamma subunit family. In terms of assembly, heterotrimer of UreA (gamma), UreB (beta) and UreC (alpha) subunits. Three heterotrimers associate to form the active enzyme.

The protein resides in the cytoplasm. It catalyses the reaction urea + 2 H2O + H(+) = hydrogencarbonate + 2 NH4(+). It functions in the pathway nitrogen metabolism; urea degradation; CO(2) and NH(3) from urea (urease route): step 1/1. The polypeptide is Urease subunit gamma (Bacillus sp. (strain TB-90)).